A 490-amino-acid polypeptide reads, in one-letter code: MTQGKKKKRAANRSIMLAKKIIIKDGGTPQGIGSPSVYHAVIVIFLEFFAWGLLTAPTLVVLHETFPKHTFLMNGLIQGVKGLLSFLSAPLIGALSDVWGRKSFLLLTVFFTCAPIPLMKISPWWYFAVISVSGVFAVTFSVVFAYVADITQEHERSMAYGLVSATFAASLVTSPAIGAYLGRVYGDSLVVVLATAIALLDICFILVAVPESLPEKMRPASWGAPISWEQADPFASLKKVGQDSIVLLICITVFLSYLPEAGQYSSFFLYLRQIMKFSPESVAAFIAVLGILSIIAQTIVLSLLMRSIGNKNTILLGLGFQILQLAWYGFGSEPWMMWAAGAVAAMSSITFPAVSALVSRTADADQQGVVQGMITGIRGLCNGLGPALYGFIFYIFHVELKELPITGTDLGTNTSPQHHFEQNSIIPGPPFLFGACSVLLALLVALFIPEHTNLSLRSSSWRKHCGSHSHPHSTQAPGEAKEPLLQDTNV.

An N-acetylmethionine modification is found at Met1. Over 1–40 (MTQGKKKKRAANRSIMLAKKIIIKDGGTPQGIGSPSVYHA) the chain is Extracellular. Asn12 is a glycosylation site (N-linked (GlcNAc...) asparagine). A helical transmembrane segment spans residues 41–61 (VIVIFLEFFAWGLLTAPTLVV). Residues 62 to 74 (LHETFPKHTFLMN) lie on the Cytoplasmic side of the membrane. The helical transmembrane segment at 75-95 (GLIQGVKGLLSFLSAPLIGAL) threads the bilayer. The Extracellular segment spans residues 96–103 (SDVWGRKS). The chain crosses the membrane as a helical span at residues 104-124 (FLLLTVFFTCAPIPLMKISPW). Residues 125 to 126 (WY) lie on the Cytoplasmic side of the membrane. A helical transmembrane segment spans residues 127-147 (FAVISVSGVFAVTFSVVFAYV). The Extracellular portion of the chain corresponds to 148–160 (ADITQEHERSMAY). Residues 161-181 (GLVSATFAASLVTSPAIGAYL) traverse the membrane as a helical segment. Residues 182–188 (GRVYGDS) are Cytoplasmic-facing. A helical transmembrane segment spans residues 189–209 (LVVVLATAIALLDICFILVAV). Residues 210 to 243 (PESLPEKMRPASWGAPISWEQADPFASLKKVGQD) are Extracellular-facing. The chain crosses the membrane as a helical span at residues 244-264 (SIVLLICITVFLSYLPEAGQY). The Cytoplasmic portion of the chain corresponds to 265 to 284 (SSFFLYLRQIMKFSPESVAA). A helical membrane pass occupies residues 285–305 (FIAVLGILSIIAQTIVLSLLM). The Extracellular segment spans residues 306–313 (RSIGNKNT). A helical transmembrane segment spans residues 314-334 (ILLGLGFQILQLAWYGFGSEP). The Cytoplasmic portion of the chain corresponds to 335–337 (WMM). The helical transmembrane segment at 338 to 358 (WAAGAVAAMSSITFPAVSALV) threads the bilayer. Over 359–379 (SRTADADQQGVVQGMITGIRG) the chain is Extracellular. Residues 380 to 400 (LCNGLGPALYGFIFYIFHVEL) traverse the membrane as a helical segment. At 401–427 (KELPITGTDLGTNTSPQHHFEQNSIIP) the chain is on the cytoplasmic side. Residues 428-448 (GPPFLFGACSVLLALLVALFI) form a helical membrane-spanning segment. The Extracellular segment spans residues 449 to 490 (PEHTNLSLRSSSWRKHCGSHSHPHSTQAPGEAKEPLLQDTNV). Asn453 is a glycosylation site (N-linked (GlcNAc...) asparagine). Positions 466–490 (GSHSHPHSTQAPGEAKEPLLQDTNV) are disordered.

The protein belongs to the major facilitator superfamily. As to expression, expressed in various tissues.

Its subcellular location is the membrane. In Mus musculus (Mouse), this protein is Hippocampus abundant transcript 1 protein.